A 231-amino-acid polypeptide reads, in one-letter code: Ribose-5-phosphate isomerase A (231 aa).

Residues 31-34 (TGST), 86-89 (DGAD), and 100-103 (KGLG) each bind substrate. The active-site Proton acceptor is E109. A substrate-binding site is contributed by K127.

It belongs to the ribose 5-phosphate isomerase family. Homodimer.

It catalyses the reaction aldehydo-D-ribose 5-phosphate = D-ribulose 5-phosphate. The protein operates within carbohydrate degradation; pentose phosphate pathway; D-ribose 5-phosphate from D-ribulose 5-phosphate (non-oxidative stage): step 1/1. In terms of biological role, catalyzes the reversible conversion of ribose-5-phosphate to ribulose 5-phosphate. The protein is Ribose-5-phosphate isomerase A of Gluconobacter oxydans (strain 621H) (Gluconobacter suboxydans).